Here is an 83-residue protein sequence, read N- to C-terminus: Apolipoprotein C-I (83 aa).

A signal peptide spans 1–26; sequence MRLILSLPVLAVVLAMVLEGPAPAQA.

The protein belongs to the apolipoprotein C1 family.

The protein localises to the secreted. Functionally, inhibitor of lipoprotein binding to the low density lipoprotein (LDL) receptor, LDL receptor-related protein, and very low density lipoprotein (VLDL) receptor. Associates with high density lipoproteins (HDL) and the triacylglycerol-rich lipoproteins in the plasma and makes up about 10% of the protein of the VLDL and 2% of that of HDL. Appears to interfere directly with fatty acid uptake and is also the major plasma inhibitor of cholesteryl ester transfer protein (CETP). Binds free fatty acids and reduces their intracellular esterification. Modulates the interaction of APOE with beta-migrating VLDL and inhibits binding of beta-VLDL to the LDL receptor-related protein. The polypeptide is Apolipoprotein C-I (APOC1) (Rousettus aegyptiacus (Egyptian fruit bat)).